A 696-amino-acid chain; its full sequence is Glycine--tRNA ligase beta subunit (696 aa).

This sequence belongs to the class-II aminoacyl-tRNA synthetase family. As to quaternary structure, tetramer of two alpha and two beta subunits.

The protein resides in the cytoplasm. The enzyme catalyses tRNA(Gly) + glycine + ATP = glycyl-tRNA(Gly) + AMP + diphosphate. This is Glycine--tRNA ligase beta subunit from Nitratidesulfovibrio vulgaris (strain ATCC 29579 / DSM 644 / CCUG 34227 / NCIMB 8303 / VKM B-1760 / Hildenborough) (Desulfovibrio vulgaris).